Reading from the N-terminus, the 512-residue chain is Putative B3 domain-containing protein REM4 (512 aa).

Residues 11-103 (NKAFFIIDLS…VFHVSPFGRS (93 aa)) constitute a DNA-binding region (TF-B3 1). Residues 111 to 145 (SSSTSDDDDDERTVFDDDEDDDVGDDDDNSISEDD) form a disordered region. The segment covering 115–145 (SDDDDDERTVFDDDEDDDVGDDDDNSISEDD) has biased composition (acidic residues). 2 consecutive DNA-binding regions (TF-B3) follow at residues 169–265 (YLVA…LCPN) and 307–403 (ILTF…CSKV). The disordered stretch occupies residues 408–465 (SSDGHKTADRKPRMTDQAPLAEEQTDNRVEKRAQVTEEGGPSRSTRADPGNLQQKQPC). 2 stretches are compositionally biased toward basic and acidic residues: residues 410 to 421 (DGHKTADRKPRM) and 432 to 442 (TDNRVEKRAQV).

It is found in the nucleus. This is Putative B3 domain-containing protein REM4 (REM4) from Arabidopsis thaliana (Mouse-ear cress).